The chain runs to 378 residues: S-adenosylmethionine synthase (378 aa).

Residue H15 participates in ATP binding. D17 lines the Mg(2+) pocket. E43 lines the K(+) pocket. L-methionine contacts are provided by E56 and Q99. Positions 99–109 (QSPDINQGINR) are flexible loop. ATP contacts are provided by residues 164-166 (DAK), 230-231 (RF), D239, 245-246 (RK), A262, and K266. D239 provides a ligand contact to L-methionine. Position 270 (K270) interacts with L-methionine.

Belongs to the AdoMet synthase family. As to quaternary structure, homotetramer; dimer of dimers. It depends on Mg(2+) as a cofactor. Requires K(+) as cofactor.

It is found in the cytoplasm. It catalyses the reaction L-methionine + ATP + H2O = S-adenosyl-L-methionine + phosphate + diphosphate. It participates in amino-acid biosynthesis; S-adenosyl-L-methionine biosynthesis; S-adenosyl-L-methionine from L-methionine: step 1/1. Its function is as follows. Catalyzes the formation of S-adenosylmethionine (AdoMet) from methionine and ATP. The overall synthetic reaction is composed of two sequential steps, AdoMet formation and the subsequent tripolyphosphate hydrolysis which occurs prior to release of AdoMet from the enzyme. This chain is S-adenosylmethionine synthase, found in Buchnera aphidicola subsp. Acyrthosiphon pisum (strain 5A).